We begin with the raw amino-acid sequence, 444 residues long: Aflatoxin biosynthesis regulatory protein (444 aa).

Residues 1-25 (MVDHISPRASPGPIRSSQTRRARKL) form a disordered region. The zn(2)-C6 fungal-type DNA-binding region spans 29-56 (CTSCASSKVRCTKEKPACARCIERGLAC). Residues 64 to 174 (MGRNPRAPSP…AGQEQSTLSS (111 aa)) form a disordered region. Over residues 106–116 (TQAHTHAHSHP) the composition is skewed to basic residues. Over residues 120–130 (PQSHPQSNQPP) the composition is skewed to low complexity. Polar residues predominate over residues 136–149 (PNGSSSVSAIFSHQ).

As to quaternary structure, interacts with aflS.

It localises to the nucleus. Functionally, transcription factor; part of the gene cluster that mediates the biosynthesis of aflatoxin, a polyketide-derived furanocoumarin which is part of the most toxic and carcinogenic compounds among the known mycotoxins. Binds to at least 17 genes in the aflatoxin biosynthetic cluster, leading to the activation of an enzymatic cascade reaction that results in aflatoxin biosynthesis. Promoter regions of several biosynthesis genes are bound by aflR in a dimeric form with a 5'-TCG(N5)CGA-3' binding motif. AflR also recognizes 5'-TTAGGCCTAA-3' and 5'-TCGCAGCCCGG-3' binding sequences. AflR achieves its binding specificity through a mechanism in which either two copies of aflR or its complex with aflS bind to target sites on DNA in a highly cooperative manner. AflS acts as a modulator of aflR's DNA-binding by decreasing its DNA-binding affinity. In addition to aflatoxin biosynthesis, also plays a positive role in the fungal growth, spore germination, sclerotial development, and carbohydrate metabolism. This Aspergillus flavus (strain ATCC 200026 / FGSC A1120 / IAM 13836 / NRRL 3357 / JCM 12722 / SRRC 167) protein is Aflatoxin biosynthesis regulatory protein.